The following is a 97-amino-acid chain: Theromacin (97 aa).

The first 22 residues, 1 to 22, serve as a signal peptide directing secretion; the sequence is MELKSGLSILLCFGICIAVINA. 5 disulfides stabilise this stretch: Cys24–Cys31, Cys46–Cys50, Cys53–Cys95, Cys61–Cys69, and Cys79–Cys81.

Coelomic liquid (at protein level). Expressed in large fat cells in contact with coelomic cavities, in intestinal epithelia and at the epidermis level.

The protein resides in the secreted. In terms of biological role, has a bactericidal activity. Active against M.luteus. No activity toward E.coli and F.oxysporum. This Theromyzon tessulatum (Duck leech) protein is Theromacin.